Here is a 295-residue protein sequence, read N- to C-terminus: Light-independent protochlorophyllide reductase iron-sulfur ATP-binding protein (295 aa).

ATP contacts are provided by residues 10 to 15 (GIGKST) and lysine 39. Serine 14 serves as a coordination point for Mg(2+). 2 residues coordinate [4Fe-4S] cluster: cysteine 95 and cysteine 129. 180-181 (NR) contributes to the ATP binding site. Residues 275–289 (TKDKKENKKEDKENS) are compositionally biased toward basic and acidic residues. Residues 275–295 (TKDKKENKKEDKENSADFTWL) are disordered.

Belongs to the NifH/BchL/ChlL family. Homodimer. Protochlorophyllide reductase is composed of three subunits; ChlL, ChlN and ChlB. Requires [4Fe-4S] cluster as cofactor.

Its subcellular location is the plastid. The protein localises to the chloroplast. The catalysed reaction is chlorophyllide a + oxidized 2[4Fe-4S]-[ferredoxin] + 2 ADP + 2 phosphate = protochlorophyllide a + reduced 2[4Fe-4S]-[ferredoxin] + 2 ATP + 2 H2O. The protein operates within porphyrin-containing compound metabolism; chlorophyll biosynthesis (light-independent). Component of the dark-operative protochlorophyllide reductase (DPOR) that uses Mg-ATP and reduced ferredoxin to reduce ring D of protochlorophyllide (Pchlide) to form chlorophyllide a (Chlide). This reaction is light-independent. The L component serves as a unique electron donor to the NB-component of the complex, and binds Mg-ATP. This is Light-independent protochlorophyllide reductase iron-sulfur ATP-binding protein from Physcomitrium patens (Spreading-leaved earth moss).